Reading from the N-terminus, the 396-residue chain is NADH-quinone oxidoreductase subunit D (396 aa).

The protein belongs to the complex I 49 kDa subunit family. NDH-1 is composed of 14 different subunits. Subunits NuoB, C, D, E, F, and G constitute the peripheral sector of the complex.

It is found in the cell inner membrane. It catalyses the reaction a quinone + NADH + 5 H(+)(in) = a quinol + NAD(+) + 4 H(+)(out). NDH-1 shuttles electrons from NADH, via FMN and iron-sulfur (Fe-S) centers, to quinones in the respiratory chain. The immediate electron acceptor for the enzyme in this species is believed to be ubiquinone. Couples the redox reaction to proton translocation (for every two electrons transferred, four hydrogen ions are translocated across the cytoplasmic membrane), and thus conserves the redox energy in a proton gradient. The chain is NADH-quinone oxidoreductase subunit D from Agrobacterium fabrum (strain C58 / ATCC 33970) (Agrobacterium tumefaciens (strain C58)).